The primary structure comprises 280 residues: tRNA (guanine-N(1)-)-methyltransferase (280 aa).

The segment at 71–94 (DDVSSGTASTQDLQSALPHLSKPR) is disordered. Residues 74–84 (SSGTASTQDLQ) show a composition bias toward polar residues. S-adenosyl-L-methionine is bound by residues Gly-146 and 170–175 (IGDYVL).

Belongs to the RNA methyltransferase TrmD family. As to quaternary structure, homodimer.

It localises to the cytoplasm. The enzyme catalyses guanosine(37) in tRNA + S-adenosyl-L-methionine = N(1)-methylguanosine(37) in tRNA + S-adenosyl-L-homocysteine + H(+). Specifically methylates guanosine-37 in various tRNAs. The chain is tRNA (guanine-N(1)-)-methyltransferase from Corynebacterium aurimucosum (strain ATCC 700975 / DSM 44827 / CIP 107346 / CN-1) (Corynebacterium nigricans).